We begin with the raw amino-acid sequence, 125 residues long: Large ribosomal subunit protein bL12 (125 aa).

Belongs to the bacterial ribosomal protein bL12 family. In terms of assembly, homodimer. Part of the ribosomal stalk of the 50S ribosomal subunit. Forms a multimeric L10(L12)X complex, where L10 forms an elongated spine to which 2 to 4 L12 dimers bind in a sequential fashion. Binds GTP-bound translation factors.

Forms part of the ribosomal stalk which helps the ribosome interact with GTP-bound translation factors. Is thus essential for accurate translation. In Campylobacter curvus (strain 525.92), this protein is Large ribosomal subunit protein bL12.